The following is a 794-amino-acid chain: Cadherin-12 (794 aa).

The signal sequence occupies residues Met-1 to Leu-23. Positions Gln-24–Arg-54 are excised as a propeptide. 5 Cadherin domains span residues Gly-55–Phe-160, Leu-161–Phe-269, Pro-270–Phe-384, Ser-385–Pro-487, and Glu-488–Pro-609. Residues Gly-55–Pro-609 are Extracellular-facing. Residue Asn-256 is glycosylated (N-linked (GlcNAc...) asparagine). N-linked (GlcNAc...) asparagine glycans are attached at residues Asn-456, Asn-537, and Asn-545. A helical membrane pass occupies residues Val-610 to Leu-637. Topologically, residues Arg-638–Thr-794 are cytoplasmic. The residue at position 787 (Ser-787) is a Phosphoserine.

In terms of tissue distribution, brain.

It localises to the cell membrane. Functionally, cadherins are calcium-dependent cell adhesion proteins. They preferentially interact with themselves in a homophilic manner in connecting cells; cadherins may thus contribute to the sorting of heterogeneous cell types. This Homo sapiens (Human) protein is Cadherin-12 (CDH12).